The primary structure comprises 92 residues: RIIa domain-containing protein 1 (92 aa).

An RIIa domain is found at 43–77; it reads KEVEWLISGFFREIFLKRPDNILEFAADYFTDPRL.

The sequence is that of RIIa domain-containing protein 1 (RIIAD1) from Homo sapiens (Human).